A 105-amino-acid chain; its full sequence is Resistin-like beta (105 aa).

Residues 1 to 23 form the signal peptide; the sequence is MKPTLCFLFILVSLFPLIVPGNA. Intrachain disulfides connect C49–C102, C61–C101, C70–C87, C72–C89, and C76–C91.

The protein belongs to the resistin/FIZZ family. Homodimer; disulfide-linked. Heterodimer with RETNLG. As to expression, strongly expressed in colon, and at lower levels in ileum. In colon, found throughout the crypt and surface epithelium and in goblet cells (at protein level). Specific to the gastrointestinal tract; not detected in other tissues tested.

The protein localises to the secreted. Functionally, probable hormone. In Mus musculus (Mouse), this protein is Resistin-like beta (Retnlb).